The chain runs to 165 residues: Large ribosomal subunit protein uL10 (165 aa).

Belongs to the universal ribosomal protein uL10 family. In terms of assembly, part of the ribosomal stalk of the 50S ribosomal subunit. The N-terminus interacts with L11 and the large rRNA to form the base of the stalk. The C-terminus forms an elongated spine to which L12 dimers bind in a sequential fashion forming a multimeric L10(L12)X complex.

Forms part of the ribosomal stalk, playing a central role in the interaction of the ribosome with GTP-bound translation factors. This chain is Large ribosomal subunit protein uL10, found in Burkholderia lata (strain ATCC 17760 / DSM 23089 / LMG 22485 / NCIMB 9086 / R18194 / 383).